A 353-amino-acid chain; its full sequence is Peptide-N(4)-(N-acetyl-beta-glucosaminyl)asparagine amidase (353 aa).

3 residues coordinate Zn(2+): cysteine 125, cysteine 128, and cysteine 159. Cysteine 185 functions as the Nucleophile in the catalytic mechanism. Catalysis depends on residues histidine 212 and aspartate 229. Glutamate 232 contributes to the substrate binding site. Positions 316–353 are disordered; it reads SLEKTKPSKDTSTTTLTGTKGRESGSTAWKQQRGEDGS. The segment covering 325–334 has biased composition (low complexity); that stretch reads DTSTTTLTGT.

This sequence belongs to the transglutaminase-like superfamily. PNGase family. It depends on Zn(2+) as a cofactor.

The protein resides in the cytoplasm. It carries out the reaction Hydrolysis of an N(4)-(acetyl-beta-D-glucosaminyl)asparagine residue in which the glucosamine residue may be further glycosylated, to yield a (substituted) N-acetyl-beta-D-glucosaminylamine and a peptide containing an aspartate residue.. Specifically deglycosylates the denatured form of N-linked glycoproteins in the cytoplasm and assists their proteasome-mediated degradation. Cleaves the beta-aspartyl-glucosamine (GlcNAc) of the glycan and the amide side chain of Asn, converting Asn to Asp. Prefers proteins containing high-mannose over those bearing complex type oligosaccharides. Can recognize misfolded proteins in the endoplasmic reticulum that are exported to the cytosol to be destroyed and deglycosylate them, while it has no activity toward native proteins. Deglycosylation is a prerequisite for subsequent proteasome-mediated degradation of some, but not all, misfolded glycoproteins. The protein is Peptide-N(4)-(N-acetyl-beta-glucosaminyl)asparagine amidase (PNG1) of Kluyveromyces lactis (strain ATCC 8585 / CBS 2359 / DSM 70799 / NBRC 1267 / NRRL Y-1140 / WM37) (Yeast).